Consider the following 172-residue polypeptide: 3-phenylpropionate/cinnamic acid dioxygenase subunit beta (172 aa).

It belongs to the bacterial ring-hydroxylating dioxygenase beta subunit family. As to quaternary structure, this dioxygenase system consists of four proteins: the two subunits of the hydroxylase component (HcaE and HcaF), a ferredoxin (HcaC) and a ferredoxin reductase (HcaD).

It catalyses the reaction 3-phenylpropanoate + NADH + O2 + H(+) = 3-(cis-5,6-dihydroxycyclohexa-1,3-dien-1-yl)propanoate + NAD(+). It carries out the reaction (E)-cinnamate + NADH + O2 + H(+) = (2E)-3-(cis-5,6-dihydroxycyclohexa-1,3-dien-1-yl)prop-2-enoate + NAD(+). It participates in aromatic compound metabolism; 3-phenylpropanoate degradation. In terms of biological role, part of the multicomponent 3-phenylpropionate dioxygenase. Converts 3-phenylpropionic acid (PP) and cinnamic acid (CI) into 3-phenylpropionate-dihydrodiol (PP-dihydrodiol) and cinnamic acid-dihydrodiol (CI-dihydrodiol), respectively. In Escherichia coli O17:K52:H18 (strain UMN026 / ExPEC), this protein is 3-phenylpropionate/cinnamic acid dioxygenase subunit beta.